The following is a 124-amino-acid chain: Putative outer membrane protein CT_569 (124 aa).

Positions 1–31 are cleaved as a signal peptide; sequence MKKTKKRKQSITLVEMMVVITLIGIIGGALA.

It localises to the cell outer membrane. The polypeptide is Putative outer membrane protein CT_569 (Chlamydia trachomatis serovar D (strain ATCC VR-885 / DSM 19411 / UW-3/Cx)).